Consider the following 804-residue polypeptide: Phenylalanine--tRNA ligase beta subunit (804 aa).

In terms of domain architecture, tRNA-binding spans 38 to 148 (RSSLKGFVIA…EDAPIGGLFA (111 aa)). One can recognise a B5 domain in the interval 401–476 (PEIKQIAFPF…RIYGLDKIEP (76 aa)). Mg(2+) is bound by residues D454, D460, E463, and E464. Positions 710-803 (SPFQMVRRDF…VTKATGAYLR (94 aa)) constitute an FDX-ACB domain.

Belongs to the phenylalanyl-tRNA synthetase beta subunit family. Type 1 subfamily. Tetramer of two alpha and two beta subunits. The cofactor is Mg(2+).

Its subcellular location is the cytoplasm. The enzyme catalyses tRNA(Phe) + L-phenylalanine + ATP = L-phenylalanyl-tRNA(Phe) + AMP + diphosphate + H(+). The polypeptide is Phenylalanine--tRNA ligase beta subunit (Bartonella quintana (strain Toulouse) (Rochalimaea quintana)).